Here is a 159-residue protein sequence, read N- to C-terminus: Regulator of G-protein signaling 13 (159 aa).

An RGS domain is found at 34 to 150 (SFENLMATKY…LKSEMYQKLL (117 aa)).

In terms of biological role, inhibits signal transduction by increasing the GTPase activity of G protein alpha subunits thereby driving them into their inactive GDP-bound form. Binds to both G(i)-alpha and G(q)-alpha. The chain is Regulator of G-protein signaling 13 (RGS13) from Homo sapiens (Human).